The chain runs to 903 residues: Translation initiation factor IF-2 (903 aa).

The tract at residues 66–296 (QATLKGEGPV…GRSRKREMEN (231 aa)) is disordered. A compositionally biased stretch (basic and acidic residues) spans 121 to 132 (NTDETRVQEHKP). Composition is skewed to low complexity over residues 139-152 (AGDA…AAAG) and 178-195 (AATG…GQQS). Basic and acidic residues predominate over residues 204–231 (EGRSRQDENKGSAREDQANRFATRDKEA). The span at 246–255 (RRPAHSKPLR) shows a compositional bias: basic residues. Composition is skewed to basic and acidic residues over residues 263–276 (VTKD…DRSN) and 285–296 (ESGRSRKREMEN). Residues 403–572 (ERPPVVTVMG…LLTADVAELK (170 aa)) enclose the tr-type G domain. The interval 412 to 419 (GHVDHGKT) is G1. A GTP-binding site is contributed by 412–419 (GHVDHGKT). Residues 437 to 441 (GITQH) are G2. A G3 region spans residues 458–461 (DTPG). GTP-binding positions include 458–462 (DTPGH) and 512–515 (NKID). Residues 512–515 (NKID) are G4. Positions 548-550 (SAV) are G5.

Belongs to the TRAFAC class translation factor GTPase superfamily. Classic translation factor GTPase family. IF-2 subfamily.

It is found in the cytoplasm. Its function is as follows. One of the essential components for the initiation of protein synthesis. Protects formylmethionyl-tRNA from spontaneous hydrolysis and promotes its binding to the 30S ribosomal subunits. Also involved in the hydrolysis of GTP during the formation of the 70S ribosomal complex. In Moorella thermoacetica (strain ATCC 39073 / JCM 9320), this protein is Translation initiation factor IF-2.